Consider the following 117-residue polypeptide: Protein TCL1B2 (117 aa).

Belongs to the TCL1 family.

This is Protein TCL1B2 (Tcl1b2) from Mus musculus (Mouse).